The following is an 805-amino-acid chain: Transcription factor E2f1 (805 aa).

Disordered regions lie at residues 9 to 45 (APIN…TTGH), 119 to 208 (AAAA…LRHD), and 224 to 255 (PASH…RNRA). Low complexity-rich tracts occupy residues 12-37 (NNSN…QQHY) and 119-134 (AAAA…QLQQ). 2 stretches are compositionally biased toward polar residues: residues 144–154 (RKATGKSNDIT) and 181–195 (HHQT…SSAP). The PIP-box K+4 motif motif lies at 147-161 (TGKSNDITNYYKVKR). The segment covering 240 to 249 (AASVASSSSS) has biased composition (low complexity). A DNA-binding region spans residues 253–318 (NRADTSLGIL…KKSKNNIQWR (66 aa)). The tract at residues 318 to 411 (RCGQSMVSQE…LPNTKLPREI (94 aa)) is dimerization. Ser434 is modified (phosphoserine). Disordered regions lie at residues 578-650 (SLTE…QRRS) and 714-743 (GAGA…DANS). Low complexity-rich tracts occupy residues 595–615 (AAAA…NSHN) and 623–636 (SNHS…NSKS). The span at 637–647 (QPPTIGYGSSQ) shows a compositional bias: polar residues.

The protein belongs to the E2F/DP family. In terms of assembly, heterodimer of E2f and Dp. Cooperates to give sequence-specific DNA binding and optimal trans-activation. Interacts with PCNA. Ubiquitinated by the DCX(DTL) complex, also named CRL4(CDT2) complex, leading to its degradation during S phase. Ubiquitination by the DCX(DTL) complex is essential for cell cycle control and is PCNA-dependent: interacts with PCNA via its PIP-box, while the presence of the containing the 'K+4' motif in the PIP box, recruit the DCX(DTL) complex, leading to its degradation. In terms of tissue distribution, segmentally repeated expression throughout early embryos is restricted to the ventral nerve cord in later embryos.

The protein resides in the nucleus. Its function is as follows. Transcriptional activator that binds to E2f sites. Required for wild-type growth in mitotic and polytene tissues, Contributes to the expression of replication genes at the G1-S transition and Cyclin E. Activates cell proliferation in wing imaginal disk, which requires expression of vg. This is Transcription factor E2f1 from Drosophila melanogaster (Fruit fly).